Consider the following 1325-residue polypeptide: Nucleoporin nup146 (1325 aa).

Disordered stretches follow at residues 1–20, 453–474, 758–951, and 973–994; these read MNAE…AGGS, VRAS…FVKN, GEGL…PKIH, and FPKQ…QESL. Over residues 763-778 the composition is skewed to polar residues; it reads QQKTSKALPSTGITKL. Residues 779-791 are compositionally biased toward basic and acidic residues; that stretch reads SENDNEKAEESNE. Residues 792–801 show a composition bias toward polar residues; the sequence is TKGFNTTIAK. The span at 802 to 811 shows a compositional bias: basic and acidic residues; that stretch reads QNDKSSKSEG. 2 stretches are compositionally biased toward polar residues: residues 816–835 and 850–861; these read ANMS…SKPS and FTFNKPSETPPF. Residues 867–881 show a composition bias toward basic and acidic residues; the sequence is LVEKESKQDVSDTSD. Threonine 899 is subject to Phosphothreonine. A compositionally biased stretch (acidic residues) spans 927–937; that stretch reads SEIEDQDEESS. Residue threonine 946 is modified to Phosphothreonine. Residues serine 1041, serine 1043, and serine 1044 each carry the phosphoserine modification.

The protein resides in the cytoplasm. It localises to the nucleus. Functionally, functions as a component of the nuclear pore complex (NPC). NPC components, collectively referred to as nucleoporins (NUPs), can play the role of both NPC structural components and of docking or interaction partners for transiently associated nuclear transport factors. Active directional transport is assured by both, a Phe-Gly (FG) repeat affinity gradient for these transport factors across the NPC and a transport cofactor concentration gradient across the nuclear envelope. This is Nucleoporin nup146 (nup146) from Schizosaccharomyces pombe (strain 972 / ATCC 24843) (Fission yeast).